A 42-amino-acid chain; its full sequence is Protein YmiD (42 aa).

The sequence is that of Protein YmiD from Escherichia coli (strain K12).